The following is a 114-amino-acid chain: MTNKTTNIQATGKYVRLSTAKTRRVLNQIKGKKYQEAILILEFMTYKPCKIIKKILESAGNNALNLKYEKQNLIIKQAFANDGPKLKRFQPRAQGRAFRIQKPTCHITINLSIN.

Belongs to the universal ribosomal protein uL22 family. In terms of assembly, part of the 50S ribosomal subunit.

The protein localises to the plastid. It is found in the chloroplast. This protein binds specifically to 23S rRNA. Its function is as follows. The globular domain of the protein is located near the polypeptide exit tunnel on the outside of the subunit, while an extended beta-hairpin is found that lines the wall of the exit tunnel in the center of the 70S ribosome. In Gracilaria tenuistipitata var. liui (Red alga), this protein is Large ribosomal subunit protein uL22c (rpl22).